The sequence spans 363 residues: Uptake hydrogenase small subunit (363 aa).

A signal peptide (tat-type signal) is located at residues 1–43 (MIETFYEVMRRQGISRRSFLKYCSLTATSLGLSPVFVPKIVHA). 8 residues coordinate [4Fe-4S] cluster: Cys60, Cys63, Cys158, Cys192, His230, Cys233, Cys258, and Cys264. Residues Cys273, Cys292, and Cys295 each contribute to the [3Fe-4S] cluster site.

This sequence belongs to the [NiFe]/[NiFeSe] hydrogenase small subunit family. In terms of assembly, heterodimer of a large and a small subunit. The cofactor is [4Fe-4S] cluster. Requires [3Fe-4S] cluster as cofactor. Predicted to be exported by the Tat system. The position of the signal peptide cleavage has not been experimentally proven.

The protein localises to the cell membrane. The catalysed reaction is H2 + A = AH2. In terms of biological role, this enzyme recycles the H(2) produced by nitrogenase to increase the production of ATP and to protect nitrogenase against inhibition or damage by O(2) under carbon- or phosphate-limited conditions. The protein is Uptake hydrogenase small subunit (hupS) of Alcaligenes hydrogenophilus.